The primary structure comprises 308 residues: tRNA pseudouridine synthase B (308 aa).

Residue Asp47 is the Nucleophile of the active site.

Belongs to the pseudouridine synthase TruB family. Type 1 subfamily.

The enzyme catalyses uridine(55) in tRNA = pseudouridine(55) in tRNA. Its function is as follows. Responsible for synthesis of pseudouridine from uracil-55 in the psi GC loop of transfer RNAs. The sequence is that of tRNA pseudouridine synthase B from Xanthomonas euvesicatoria pv. vesicatoria (strain 85-10) (Xanthomonas campestris pv. vesicatoria).